We begin with the raw amino-acid sequence, 448 residues long: Glutamyl-tRNA reductase (448 aa).

Substrate contacts are provided by residues 48 to 51 (TCNR), Ser100, 105 to 107 (EDQ), and Gln111. Cys49 (nucleophile) is an active-site residue. 180–185 (GAGEIG) lines the NADP(+) pocket.

It belongs to the glutamyl-tRNA reductase family. In terms of assembly, homodimer.

It carries out the reaction (S)-4-amino-5-oxopentanoate + tRNA(Glu) + NADP(+) = L-glutamyl-tRNA(Glu) + NADPH + H(+). It participates in porphyrin-containing compound metabolism; protoporphyrin-IX biosynthesis; 5-aminolevulinate from L-glutamyl-tRNA(Glu): step 1/2. Its function is as follows. Catalyzes the NADPH-dependent reduction of glutamyl-tRNA(Glu) to glutamate 1-semialdehyde (GSA). The protein is Glutamyl-tRNA reductase of Methanosarcina mazei (strain ATCC BAA-159 / DSM 3647 / Goe1 / Go1 / JCM 11833 / OCM 88) (Methanosarcina frisia).